The following is a 208-amino-acid chain: Small ribosomal subunit protein uS4 (208 aa).

The S4 RNA-binding domain occupies 98–159 (RRLDNVAYRL…KSRKVAAISE (62 aa)).

The protein belongs to the universal ribosomal protein uS4 family. In terms of assembly, part of the 30S ribosomal subunit. Contacts protein S5. The interaction surface between S4 and S5 is involved in control of translational fidelity.

Its function is as follows. One of the primary rRNA binding proteins, it binds directly to 16S rRNA where it nucleates assembly of the body of the 30S subunit. Functionally, with S5 and S12 plays an important role in translational accuracy. This is Small ribosomal subunit protein uS4 from Geobacter sp. (strain M21).